An 894-amino-acid polypeptide reads, in one-letter code: Kinesin-like protein KIN-UB (894 aa).

Residues 1–53 (MAMASSRNGAVRGSMRPVSGANSSNLRSSSFKSRIPSSAPAPRRSSSASIGAA) form a disordered region. Over residues 19-50 (SGANSSNLRSSSFKSRIPSSAPAPRRSSSASI) the composition is skewed to low complexity. Positions 60–402 (RVRVAVRLRP…ILFGQRAMKV (343 aa)) constitute a Kinesin motor domain. 145-152 (GQTGTGKT) serves as a coordination point for ATP. Residues 372-380 (RTSLIVTIG) carry the D-BOX motif. The stretch at 423–588 (VQLDKVIAEN…RSQLVQLTFE (166 aa)) forms a coiled coil. Disordered regions lie at residues 530 to 550 (EEEV…GEGE) and 598 to 623 (RGAP…ESVN). Over residues 603-623 (NSYSGTDSLPSRHSQARESVN) the composition is skewed to polar residues. 4 ARM repeats span residues 626-665 (KAPF…NLAA), 667-707 (EANQ…NLAM), 709-749 (EVSQ…NLCG), and 751-790 (DKLQ…NFAK).

It belongs to the TRAFAC class myosin-kinesin ATPase superfamily. Kinesin family. Ungrouped subfamily. Interacts (via C-terminus) with NEK5. In terms of tissue distribution, expressed in the basal regions and petioles of immature leaves and in the root elongation zone.

It localises to the cytoplasm. It is found in the cytoskeleton. Its function is as follows. Involved in the control of epidermal-cell morphogenesis in roots and helical growth of roots by promoting microtubule depolymerization and limiting the accumulation of endoplasmic microtubules. Seems to be involved in the control of cell-file rotation (or twisting). This chain is Kinesin-like protein KIN-UB, found in Arabidopsis thaliana (Mouse-ear cress).